The chain runs to 82 residues: U1-theraphotoxin-Ct1b (82 aa).

A signal peptide spans M1 to A23. The propeptide occupies E24 to R44.

The protein belongs to the neurotoxin 12 (Hwtx-2) family. 03 (juruin) subfamily. Post-translationally, contains 3 disulfide bonds. Two different connectivities are observed in similar proteins (C1-C3, C2-C5, C4-C6 or C1-C4, C2-C5, C3-C6). Expressed by the venom gland.

The protein resides in the secreted. Functionally, this toxin causes paralysis and death to sheep blowflies. It does not target insect sodium channels. The chain is U1-theraphotoxin-Ct1b from Coremiocnemis tropix (Australian tarantula spider).